The sequence spans 366 residues: 3-dehydroquinate synthase (366 aa).

NAD(+) contacts are provided by residues 69-74 (DGEAFK), 103-107 (GVIGD), 127-128 (TT), Lys-140, and Lys-149. Residues Glu-182, His-245, and His-262 each coordinate Zn(2+).

Belongs to the sugar phosphate cyclases superfamily. Dehydroquinate synthase family. Co(2+) is required as a cofactor. The cofactor is Zn(2+). It depends on NAD(+) as a cofactor.

The protein resides in the cytoplasm. It catalyses the reaction 7-phospho-2-dehydro-3-deoxy-D-arabino-heptonate = 3-dehydroquinate + phosphate. Its pathway is metabolic intermediate biosynthesis; chorismate biosynthesis; chorismate from D-erythrose 4-phosphate and phosphoenolpyruvate: step 2/7. In terms of biological role, catalyzes the conversion of 3-deoxy-D-arabino-heptulosonate 7-phosphate (DAHP) to dehydroquinate (DHQ). The protein is 3-dehydroquinate synthase of Pseudomonas fluorescens (strain Pf0-1).